The chain runs to 417 residues: NADH-quinone oxidoreductase subunit D (417 aa).

It belongs to the complex I 49 kDa subunit family. NDH-1 is composed of 14 different subunits. Subunits NuoB, C, D, E, F, and G constitute the peripheral sector of the complex.

It is found in the cell inner membrane. The catalysed reaction is a quinone + NADH + 5 H(+)(in) = a quinol + NAD(+) + 4 H(+)(out). Its function is as follows. NDH-1 shuttles electrons from NADH, via FMN and iron-sulfur (Fe-S) centers, to quinones in the respiratory chain. The immediate electron acceptor for the enzyme in this species is believed to be ubiquinone. Couples the redox reaction to proton translocation (for every two electrons transferred, four hydrogen ions are translocated across the cytoplasmic membrane), and thus conserves the redox energy in a proton gradient. The polypeptide is NADH-quinone oxidoreductase subunit D (Cupriavidus metallidurans (strain ATCC 43123 / DSM 2839 / NBRC 102507 / CH34) (Ralstonia metallidurans)).